The sequence spans 137 residues: ATP synthase epsilon chain (137 aa).

It belongs to the ATPase epsilon chain family. In terms of assembly, F-type ATPases have 2 components, CF(1) - the catalytic core - and CF(0) - the membrane proton channel. CF(1) has five subunits: alpha(3), beta(3), gamma(1), delta(1), epsilon(1). CF(0) has three main subunits: a, b and c.

It is found in the cell inner membrane. In terms of biological role, produces ATP from ADP in the presence of a proton gradient across the membrane. This Yersinia pestis bv. Antiqua (strain Antiqua) protein is ATP synthase epsilon chain.